The chain runs to 357 residues: Holliday junction branch migration complex subunit RuvB (357 aa).

Residues 4-195 form a large ATPase domain (RuvB-L) region; sequence TDKLAAKAVS…FGIVARLEFY (192 aa). Residues Leu34, Arg35, Gly76, Lys79, Thr80, Thr81, 142–144, Arg185, Tyr195, and Arg232 each bind ATP; that span reads EDY. A Mg(2+)-binding site is contributed by Thr80. The small ATPAse domain (RuvB-S) stretch occupies residues 196-266; the sequence is TPAELAKIVT…VADAALAMLD (71 aa). Residues 269–357 form a head domain (RuvB-H) region; sequence AVGFDLMDRK…PVRDLWDDNQ (89 aa). Residues Arg305, Arg324, and Arg329 each contribute to the DNA site.

This sequence belongs to the RuvB family. Homohexamer. Forms an RuvA(8)-RuvB(12)-Holliday junction (HJ) complex. HJ DNA is sandwiched between 2 RuvA tetramers; dsDNA enters through RuvA and exits via RuvB. An RuvB hexamer assembles on each DNA strand where it exits the tetramer. Each RuvB hexamer is contacted by two RuvA subunits (via domain III) on 2 adjacent RuvB subunits; this complex drives branch migration. In the full resolvosome a probable DNA-RuvA(4)-RuvB(12)-RuvC(2) complex forms which resolves the HJ.

The protein resides in the cytoplasm. It catalyses the reaction ATP + H2O = ADP + phosphate + H(+). Its function is as follows. The RuvA-RuvB-RuvC complex processes Holliday junction (HJ) DNA during genetic recombination and DNA repair, while the RuvA-RuvB complex plays an important role in the rescue of blocked DNA replication forks via replication fork reversal (RFR). RuvA specifically binds to HJ cruciform DNA, conferring on it an open structure. The RuvB hexamer acts as an ATP-dependent pump, pulling dsDNA into and through the RuvAB complex. RuvB forms 2 homohexamers on either side of HJ DNA bound by 1 or 2 RuvA tetramers; 4 subunits per hexamer contact DNA at a time. Coordinated motions by a converter formed by DNA-disengaged RuvB subunits stimulates ATP hydrolysis and nucleotide exchange. Immobilization of the converter enables RuvB to convert the ATP-contained energy into a lever motion, pulling 2 nucleotides of DNA out of the RuvA tetramer per ATP hydrolyzed, thus driving DNA branch migration. The RuvB motors rotate together with the DNA substrate, which together with the progressing nucleotide cycle form the mechanistic basis for DNA recombination by continuous HJ branch migration. Branch migration allows RuvC to scan DNA until it finds its consensus sequence, where it cleaves and resolves cruciform DNA. The chain is Holliday junction branch migration complex subunit RuvB from Ralstonia pickettii (strain 12J).